A 207-amino-acid polypeptide reads, in one-letter code: ADP-ribose pyrophosphatase (207 aa).

Substrate-binding positions include 37 to 38 (RE) and R64. The region spanning 41–172 (EHFGAVAIVA…EIVNSIAIAG (132 aa)) is the Nudix hydrolase domain. Residue A76 participates in Mg(2+) binding. The Nudix box signature appears at 77 to 99 (GLLDVAGEPPHLTAARELREEVG). L78 is a substrate binding site. Mg(2+) is bound by residues E93 and E97. Residues 114-116 (APG) and E120 each bind substrate. Residue E142 coordinates Mg(2+). E142 functions as the Proton acceptor in the catalytic mechanism.

It belongs to the Nudix hydrolase family. As to quaternary structure, homodimer. Mg(2+) is required as a cofactor. Requires Mn(2+) as cofactor.

It carries out the reaction ADP-D-ribose + H2O = D-ribose 5-phosphate + AMP + 2 H(+). The enzyme catalyses 8-oxo-dGDP + H2O = 8-oxo-dGMP + phosphate + H(+). The catalysed reaction is 8-oxo-GDP + H2O = 8-oxo-GMP + phosphate + H(+). Its function is as follows. Catalyzes the hydrolysis of ADP-ribose (ADPR) to AMP and ribose-5-phosphate. Can also hydrolyze ADP-mannose and ADP-glucose, with lower efficiency. Has weaker activity with NAD, GDP-sugars and UDP-sugars. Also catalyzes the conversion of 8-oxo-dGDP to 8-oxo-dGMP, and 8-oxo-GDP to 8-oxo-GMP. Functions in concert with MutT1 to detoxify 8-oxo-dGTP to 8-oxo-dGMP and may play an important role in supporting cellular growth under oxidative stress. The catalytic efficiency is much higher for the hydrolysis of ADPR than 8-oxo-dGTP, suggesting a more relevant biological role in hydrolysis of ADPR. This is ADP-ribose pyrophosphatase from Mycobacterium tuberculosis (strain ATCC 25618 / H37Rv).